Here is a 457-residue protein sequence, read N- to C-terminus: Ribulose bisphosphate carboxylase-like protein (457 aa).

The Mg(2+) site is built by Lys199, Asp201, and Glu202. Lys199 is modified (N6-carboxylysine). The disordered stretch occupies residues 426 to 457 (AIAAFGKPAHGQAASPQPSEQASEPDAAGGDS).

Belongs to the RuBisCO large chain family. Type IV subfamily. It depends on Mg(2+) as a cofactor.

Its function is as follows. May be involved in sulfur metabolism and oxidative stress response. Does not show RuBisCO activity. The sequence is that of Ribulose bisphosphate carboxylase-like protein from Allochromatium vinosum (strain ATCC 17899 / DSM 180 / NBRC 103801 / NCIMB 10441 / D) (Chromatium vinosum).